The following is a 347-amino-acid chain: Ribosomal RNA large subunit methyltransferase M (347 aa).

S-adenosyl-L-methionine-binding positions include Ser-184, 217–220, Asp-236, Asp-256, and Asp-272; that span reads APGG. Lys-301 serves as the catalytic Proton acceptor.

The protein belongs to the class I-like SAM-binding methyltransferase superfamily. RNA methyltransferase RlmE family. RlmM subfamily. As to quaternary structure, monomer.

Its subcellular location is the cytoplasm. The catalysed reaction is cytidine(2498) in 23S rRNA + S-adenosyl-L-methionine = 2'-O-methylcytidine(2498) in 23S rRNA + S-adenosyl-L-homocysteine + H(+). Functionally, catalyzes the 2'-O-methylation at nucleotide C2498 in 23S rRNA. In Xanthomonas oryzae pv. oryzae (strain KACC10331 / KXO85), this protein is Ribosomal RNA large subunit methyltransferase M.